A 376-amino-acid chain; its full sequence is Phytanoyl-CoA hydroxylase interacting protein-like (376 aa).

2 positions are modified to phosphoserine: Ser-12 and Ser-15. The N-linked (GlcNAc...) asparagine glycan is linked to Asn-23. Ser-25 is modified (phosphoserine). Asn-37 carries N-linked (GlcNAc...) asparagine glycosylation. One can recognise a Fibronectin type-III domain in the interval Val-52–Tyr-161.

This sequence belongs to the PHYHIP family.

May play a role in the development of the central system. This chain is Phytanoyl-CoA hydroxylase interacting protein-like (PHYHIPL), found in Bos taurus (Bovine).